The sequence spans 226 residues: Protein pdh1 (226 aa).

Residues 1-26 (MNHFSKFSVTKRLLILEVLFSAISFG) form the signal peptide. At 27–41 (ISIYIKVFGRSSIVT) the chain is on the extracellular side. The helical transmembrane segment at 42–62 (FFLLCFHLVPNALFLFPWTII) threads the bilayer. Residues 63–65 (TTS) lie on the Cytoplasmic side of the membrane. The helical transmembrane segment at 66-86 (FVDANVFTLLSSILILSVYGV) threads the bilayer. Residues 87-97 (EIERSWGHKEY) are Extracellular-facing. Residues 98–118 (LLFCQFLTVIPNIAVLIPCFI) traverse the membrane as a helical segment. Over 119 to 191 (AYKITDSHYL…VFQSFPWTYF (73 aa)) the chain is Cytoplasmic. A helical membrane pass occupies residues 192-212 (CLAVSGTCISELYVLFVHPVV). Residues 213-226 (QELFHLESHTQLPI) lie on the Extracellular side of the membrane.

The protein resides in the membrane. The polypeptide is Protein pdh1 (pdh1) (Schizosaccharomyces pombe (strain 972 / ATCC 24843) (Fission yeast)).